A 258-amino-acid polypeptide reads, in one-letter code: Small ribosomal subunit protein uS3 (258 aa).

The 70-residue stretch at 16-85 (IDEYLEKELE…NPQVEVKEVD (70 aa)) folds into the KH type-2 domain. Positions 198 to 258 (RVTETPAEEA…KDADGEESEK (61 aa)) are disordered. The span at 203–245 (PAEEASEASEVVEDLEEVEDLEEIEDLEEVEDLEEVEDLEDTE) shows a compositional bias: acidic residues.

It belongs to the universal ribosomal protein uS3 family. As to quaternary structure, part of the 30S ribosomal subunit.

Its function is as follows. Binds the lower part of the 30S subunit head. This chain is Small ribosomal subunit protein uS3, found in Methanothermobacter thermautotrophicus (strain ATCC 29096 / DSM 1053 / JCM 10044 / NBRC 100330 / Delta H) (Methanobacterium thermoautotrophicum).